The chain runs to 299 residues: Ciliary microtubule inner protein 2B (299 aa).

This sequence belongs to the CIMIP2 family. Expressed in airway epithelial cells.

It localises to the cytoplasm. Its subcellular location is the cytoskeleton. The protein localises to the cilium axoneme. Functionally, microtubule inner protein (MIP) part of the dynein-decorated doublet microtubules (DMTs) in cilia axoneme, which is required for motile cilia beating. The chain is Ciliary microtubule inner protein 2B (cimip2b) from Danio rerio (Zebrafish).